The following is a 182-amino-acid chain: Ribosome-recycling factor (182 aa).

It belongs to the RRF family.

It localises to the cytoplasm. Functionally, responsible for the release of ribosomes from messenger RNA at the termination of protein biosynthesis. May increase the efficiency of translation by recycling ribosomes from one round of translation to another. The sequence is that of Ribosome-recycling factor from Prochlorococcus marinus (strain SARG / CCMP1375 / SS120).